The primary structure comprises 65 residues: Small ribosomal subunit protein eS27 (65 aa).

Residues Cys-21, Cys-24, Cys-40, and Cys-43 each contribute to the Zn(2+) site. A C4-type zinc finger spans residues 21-43 (CKDCGNVQVVFARPSSVVTCNIC).

It belongs to the eukaryotic ribosomal protein eS27 family. As to quaternary structure, part of the 30S ribosomal subunit. The cofactor is Zn(2+).

This is Small ribosomal subunit protein eS27 from Thermoplasma volcanium (strain ATCC 51530 / DSM 4299 / JCM 9571 / NBRC 15438 / GSS1).